The following is a 270-amino-acid chain: Nuclease P1 (270 aa).

Trp1, His6, His15, Asp45, and His60 together coordinate a divalent metal cation. 1–6 is a binding site for substrate; that stretch reads WGALGH. Residues 45–51, 60–63, and 73–78 each bind substrate; these read DEYRLTS, HFID, and NVDYER. 2 disulfides stabilise this stretch: Cys72–Cys217 and Cys80–Cys85. A glycan (N-linked (GlcNAc...) asparagine) is linked at Asn92. Positions 116, 120, and 126 each coordinate a divalent metal cation. A substrate binding region spans residues 116 to 164; the sequence is HFIGDMTQPLHDEAYAVGGNKINVTFDGYHDNLHSDWDTYMPQKLIGGH. N-linked (GlcNAc...) asparagine glycosylation occurs at Asn138. Residues His149 and Asp153 each coordinate a divalent metal cation. 2 N-linked (GlcNAc...) asparagine glycosylation sites follow: Asn184 and Asn197.

This sequence belongs to the nuclease type I family. The cofactor is Zn(2+).

The protein localises to the secreted. It catalyses the reaction Endonucleolytic cleavage to 5'-phosphomononucleotide and 5'-phosphooligonucleotide end-products.. Hydrolyzes only single-stranded DNA and RNA without apparent specificity for bases. The sequence is that of Nuclease P1 from Penicillium citrinum.